The primary structure comprises 109 residues: Large ribosomal subunit protein uL22 (109 aa).

The protein belongs to the universal ribosomal protein uL22 family. In terms of assembly, part of the 50S ribosomal subunit.

Functionally, this protein binds specifically to 23S rRNA; its binding is stimulated by other ribosomal proteins, e.g. L4, L17, and L20. It is important during the early stages of 50S assembly. It makes multiple contacts with different domains of the 23S rRNA in the assembled 50S subunit and ribosome. Its function is as follows. The globular domain of the protein is located near the polypeptide exit tunnel on the outside of the subunit, while an extended beta-hairpin is found that lines the wall of the exit tunnel in the center of the 70S ribosome. This Ralstonia nicotianae (strain ATCC BAA-1114 / GMI1000) (Ralstonia solanacearum) protein is Large ribosomal subunit protein uL22.